The primary structure comprises 385 residues: uncharacterized protein (385 aa).

This sequence belongs to the mimivirus L17x/L18x family.

This is an uncharacterized protein from Acanthamoeba polyphaga mimivirus (APMV).